A 220-amino-acid chain; its full sequence is Artemin (220 aa).

A signal peptide spans 1-39; sequence MELGLGGLSTLSHCPWPRQQPALWPTLAALALLSSVAEA. Residues 40-107 constitute a propeptide that is removed on maturation; the sequence is SLGSAPRSPA…ALPRGGRAAR (68 aa). The disordered stretch occupies residues 41–121; sequence LGSAPRSPAP…GSRARAAGAR (81 aa). 2 stretches are compositionally biased toward pro residues: residues 47–58 and 81–98; these read SPAPREGPPPVL and PPPQPSRPAPPPPAPPSA. The span at 99-121 shows a compositional bias: low complexity; it reads LPRGGRAARAGGPGSRARAAGAR. Intrachain disulfides connect C123–C188, C150–C216, and C154–C218. N202 is a glycosylation site (N-linked (GlcNAc...) asparagine).

This sequence belongs to the TGF-beta family. GDNF subfamily. In terms of assembly, homodimer; disulfide-linked. Interacts with GFRA3 coreceptor and RET: forms a 2:2:2 ternary complex composed of ARTN ligand, GFRA3 and RET receptor. Ubiquitous. Expressed at high levels in peripheral tissues including prostate, placenta, pancreas, heart, kidney, pituitary gland, lung and testis. Expressed at low levels in the brain.

Its subcellular location is the secreted. Its function is as follows. Growth factor that supports the survival of sensory and sympathetic peripheral neurons in culture and also supports the survival of dopaminergic neurons of the ventral mid-brain. Acts by binding to its coreceptor, GFRA3, leading to autophosphorylation and activation of the RET receptor. Strong attractant of gut hematopoietic cells thus promoting the formation Peyer's patch-like structures, a major component of the gut-associated lymphoid tissue. The chain is Artemin from Homo sapiens (Human).